The following is a 243-amino-acid chain: MRHTLFISDLHLEEETPSITAHFLYFLKHQAPKADAIYILGDFFEAWIGDDNQTPFNRKIIESLQTLARTKPTYFMRGNRDFLIGQRFAAMTGVSLLEDPSVIQLYNKPVLLMHGDSLCTLDHKHQAYRRKIMKPWVQKLMLSLPLSLRRKLAKKFREQSRRHNRTLSYGIKDVTPEEVNRVMKEQNVELLIHGHTHRPAIHDLTINGNPTKRIVLGAWHHGGSVLRYAQDGSFELQAFKIDL.

Residues Asp-9, His-11, Asp-42, Asn-79, and His-114 each contribute to the Mn(2+) site. 79–80 (NR) is a binding site for substrate. Positions 122, 160, 164, and 195 each coordinate substrate. Residues His-195 and His-197 each coordinate Mn(2+).

This sequence belongs to the LpxH family. Mn(2+) serves as cofactor.

It is found in the cell inner membrane. The catalysed reaction is UDP-2-N,3-O-bis[(3R)-3-hydroxytetradecanoyl]-alpha-D-glucosamine + H2O = 2-N,3-O-bis[(3R)-3-hydroxytetradecanoyl]-alpha-D-glucosaminyl 1-phosphate + UMP + 2 H(+). It participates in glycolipid biosynthesis; lipid IV(A) biosynthesis; lipid IV(A) from (3R)-3-hydroxytetradecanoyl-[acyl-carrier-protein] and UDP-N-acetyl-alpha-D-glucosamine: step 4/6. Functionally, hydrolyzes the pyrophosphate bond of UDP-2,3-diacylglucosamine to yield 2,3-diacylglucosamine 1-phosphate (lipid X) and UMP by catalyzing the attack of water at the alpha-P atom. Involved in the biosynthesis of lipid A, a phosphorylated glycolipid that anchors the lipopolysaccharide to the outer membrane of the cell. The polypeptide is UDP-2,3-diacylglucosamine hydrolase (Coxiella burnetii (strain Dugway 5J108-111)).